Here is a 501-residue protein sequence, read N- to C-terminus: TNF receptor-associated factor 2 (501 aa).

The residue at position 2 (Ala2) is an N-acetylalanine. Position 5 is a phosphoserine (Ser5). Thr7 carries the phosphothreonine modification. Ser11 is modified (phosphoserine). Thr22 is subject to Phosphothreonine. Residue Lys31 forms a Glycyl lysine isopeptide (Lys-Gly) (interchain with G-Cter in ubiquitin) linkage. The RING-type zinc finger occupies 34–73; sequence CSACKNILRRPFQAQCGHRYCSFCLTSILSSGPQNCAACV. Thr117 bears the Phosphothreonine; by PKC mark. 2 TRAF-type zinc fingers span residues 124-180 and 177-233; these read CHEG…VHYE and VHYE…ENLQ. The interval 283-293 is important for interaction with BIRC2 and BIRC3; that stretch reads ENIVCVLNREV. A coiled-coil region spans residues 298 to 348; that stretch reads VTAEACSRQHRLDQDKIEALSNKVQQLERSIGLKDLAMADLEQKVSELEVS. Lys320 is covalently cross-linked (Glycyl lysine isopeptide (Lys-Gly) (interchain with G-Cter in ubiquitin)). One can recognise an MATH domain in the interval 351–496; that stretch reads DGVFIWKISD…DDAIFIKAIV (146 aa).

This sequence belongs to the TNF receptor-associated factor family. A subfamily. As to quaternary structure, homotrimer. Heterotrimer with TRAF1. Heterotrimer with TRAF3 (via TRAF domain). The domain containing the RING-type and the first TRAF-type zinc finger can also form homodimers (in vitro). Interacts with TNFRSF1B/TNFR2. Interacts with TNFRSF5/CD40. Interacts with TNFRSF4, TNFRSF7/CD27, TNFRSF8/CD30, TNFRSF9/CD137, TNFRSF11A/RANK, TNFRSF13B/TACI, TNFRSF14, TNFRSF16/NGFR, TNFRSF17/BCMA, TNFRSF18/AITR, TNFRSF19/TROY, TNFRSF19L/RELT and EDAR. Stimulation of TNF-alpha receptor TNFRSF1A leads to the formation of two distinct signaling complexes. Plasma membrane-bound complex I is composed of TNFRSF1A, TRADD, RIPK1, TRAF2 and BIRC2/c-IAP1 or BIRC3 which interacts with CHUCK/IKK-alpha, IKBKB/IKK-beta and IKBKG/IKK-gamma promoting cell survival. Subsequently, TRADD, RIPK1 and TRAF2 dissociate from TNFRSF1A and form cytoplasmic complex II with FADD and caspase CASP8 promoting cell apoptosis. Interacts with TRADD. Identified in a complex with TNFRSF1A, RIPK1 and IKBKB/IKK-beta. Interacts with RIPK2. Interacts with BIRC2 and BIRC3 N-terminus; a single BIRC2 or BIRC3 molecule interacts with a heterotrimer formed by TRAF1 and TRAF2, or a TRAF2 homotrimer. Identified in a complex composed of TRAF2, TRAF3, BIRC2 and BIRC3. Interacts with BIRC2; the interaction promotes BIRC2 stability. Interaction with BIRC2 and/or BIRC3 is essential for ubiquitination of IKBKE, degradation of NFKBIA and activation of NF-kappa-B. Within complex I, phosphorylated TRAF2 interacts (via 'Lys-63'-linked polyubiquitin chains) with CHUCK/IKK-alpha, IKBKB/IKK-beta, IKBKG/IKK-gamma TAB2, TAB3 and TAK1 in response to TNF-alpha stimulation. Within complex I, interacts with UXT isoform 1 (via TPQE motif); the interaction prevents the recruitment of FADD and CASP8/caspase 8 to complex I. Forms a complex composed of TNFRSF8/CD30 or TNFRSF1B/TNFR2, and TRAF1, TRAF2 and E3 ligase TRAIP. Within the complex, interacts with TRAIP; the interaction inhibits TRAF2-mediated NF-kappa B activation. Component of a complex composed of TANK and TBK1. Interacts with TRPC4AP. Interacts with MAP3K1/MEKK1, MAP3K5/ASK1 and MAP3K11/MLK3 in response to TNF-alpha stimulation; the interaction leads to JNK activation and interaction with MAP3K5 is inhibited by PRMT1. Component of a complex composed of MAP3K14/NIK BIRC3 and TRAF3; the interaction leads to BIRC2/3-mediated ubiquitination of TRAF3 upon CD40 engagement in a TRAF2-dependent manner. Interacts with MAP3K14/NIK in response to TNF-alpha stimulation; the interaction leads to NF-kappa B activation. Interacts with PEG3; the interaction may promote TRAF2-mediated NF-kappa B activation. Interacts with HIVEP3; the interaction may inhibit TNF-alpha-TRAF2-mediated NF-kappa B and JNK activation. Interacts with TANK/ITRAF; the interaction prevents interaction between TNFRSF1B/TNFR2 and TRAF2. Interacts with deubiquitinating enzyme CYLD; the interaction results in the deubiquitination and inactivation of TRAF2. Interacts with SIAH2; the interaction leads to TRAF2 ubiquitination and degradation. Interacts with E2 conjugating enzyme UBE2N/Ubc13, E3 ligase ITCH and RNF11 in response to TNF-alpha stimulation. Interacts with ubiquitin-editing enzyme TNFAIP3/A20 in response to TNF-alpha stimulation; the interaction promotes TRAF2 dissociation from UBE2N/Ubc13, ITCH, RNF11 and TAX1BP1 and prevents prolonged TRAF-2 ubiquitination. Interacts with TAX1BP1 in response to TNF-alpha stimulation; the interaction promotes TRAF2 dissociation from UBE2N/Ubc13 and TNFAIP3/A20, and prevents prolonged TRAF-2 ubiquitination. Interacts (via C-terminus) with EIF2AK2/PKR (via the kinase catalytic domain). Interacts with deubiquitinating enzyme USP48. Interacts with PTPN2; probably involved in TNF-mediated signaling. Interacts with Toll-like receptor TLR4/3 adapter TICAM1/TRIF; the interaction may promote TICAM1 ubiquitination. Interacts with kinase/endoribonuclease ERN1/IRE1 and DAB2IP in response to ER stress; the interaction requires DAB2IP. Interacts with ERN1/IRE1 and TAOK3 in response to ER stress; the interaction may promote TRAF2 phosphorylation. Interacts (via zinc fingers) with DAB2IP (via C-terminus PER domain) in response to TNF-alpha stimulation. Interacts with CASP8AP2/FLASH. Interacts with NFATC2IP; the interaction may repress IL-4 production in T cells. Interacts with kinase CDK9. Interacts with sphingosine kinase 1 SPHK1. Interacts with kinase TNIK. Interacts with TRAFD1. Interacts with DNA phosphodiesterase TDP2. Interacts with MAVS/IPS1. Interacts with CARD14. Interacts with GPS2. Interacts with XPNPEP3. Interacts with RIPK3. Interacts with RELL2. Interacts with LRRC19. Interacts with GAPDH; promoting TRAF2 ubiquitination. Post-translationally, phosphorylated at several serine residues within the first 128 amino acid residues. Phosphorylated at Thr-117 in response to signaling via TNF and TNFRSF1A. Phosphorylation at Thr-117 is required for 'Lys-63'-linked polyubiquitination, but not for 'Lys-48'-linked polyubiquitination. Phosphorylation at Thr-117 is important for interaction with IKKA and IKKB, activation of IKK and subsequent activation of NF-kappa-B. In terms of processing, undergoes both 'Lys-48'-linked and 'Lys-63'-linked polyubiquitination. Polyubiquitinated via 'Lys-63'-linked ubiquitin in response to TNF signaling; this requires prior phosphorylation at Thr-117. 'Lys-63'-linked polyubiquitination promotes TRAF2-mediated activation of NF-kappa-B. Can be polyubiquitinated at several Lys residues via 'Lys-48'-linked ubiquitin chains in response to TNF signaling, leading to proteasomal degradation. Autoubiquitinated, leading to its subsequent proteasomal degradation. Polyubiquitinated by BIRC2 and SIAH2, leading to its subsequent proteasomal degradation. Not ubiquitinated by BIRC3 or SIAH1. Deubiquitinated by CYLD, a protease that specifically cleaves 'Lys-63'-linked polyubiquitin chains. Ubiquination is inhibited by LRRC19; inhiits proteasomal degradation. Ubiquitinated at Lys-320 by the SCF(FBXL2) complex, leading to its degradation by the proteasome. Ubiquitinated by E3 ubiquitin-protein ligase complex containing FBXO7; leading to repression of NF-kappa-B signaling. In terms of tissue distribution, isoform 1 and isoform 2 are expressed in spleen, adipose tissues, skeletal muscles, thymus, testis, heart, lung, brain. Isoform 2 is very weakly expressed in heart, lung and brain.

The protein localises to the cytoplasm. The catalysed reaction is S-ubiquitinyl-[E2 ubiquitin-conjugating enzyme]-L-cysteine + [acceptor protein]-L-lysine = [E2 ubiquitin-conjugating enzyme]-L-cysteine + N(6)-ubiquitinyl-[acceptor protein]-L-lysine.. The protein operates within protein modification; protein ubiquitination. Has very low E3 ubiquitin ligase activity in the absence of sphingosine-1-phosphate. E3 ubiquitin ligase activity is strongly activated by cytoplasmic sphingosine-1-phosphate. In terms of biological role, E3 ubiquitin-protein ligase that regulates activation of NF-kappa-B and JNK and plays a central role in the regulation of cell survival and apoptosis. Catalyzes 'Lys-63'-linked ubiquitination of target proteins, such as BIRC3, IKBKE, MLST8, RIPK1 and TICAM1. Is an essential constituent of several E3 ubiquitin-protein ligase complexes, where it promotes the ubiquitination of target proteins by bringing them into contact with other E3 ubiquitin ligases. Regulates BIRC2 and BIRC3 protein levels by inhibiting their autoubiquitination and subsequent degradation; this does not depend on the TRAF2 RING-type zinc finger domain. Plays a role in mediating activation of NF-kappa-B by EIF2AK2/PKR. In complex with BIRC2 or BIRC3, promotes ubiquitination of IKBKE. Acts as a regulator of mTORC1 and mTORC2 assembly by mediating 'Lys-63'-linked ubiquitination of MLST8, thereby inhibiting formation of the mTORC2 complex, while facilitating assembly of the mTORC1 complex. Required for normal antibody isotype switching from IgM to IgG. This chain is TNF receptor-associated factor 2 (Traf2), found in Mus musculus (Mouse).